The chain runs to 79 residues: DNA-directed RNA polymerase subunit omega (79 aa).

It belongs to the RNA polymerase subunit omega family. As to quaternary structure, the RNAP catalytic core consists of 2 alpha, 1 beta, 1 beta' and 1 omega subunit. When a sigma factor is associated with the core the holoenzyme is formed, which can initiate transcription.

The catalysed reaction is RNA(n) + a ribonucleoside 5'-triphosphate = RNA(n+1) + diphosphate. Functionally, promotes RNA polymerase assembly. Latches the N- and C-terminal regions of the beta' subunit thereby facilitating its interaction with the beta and alpha subunits. This is DNA-directed RNA polymerase subunit omega from Thermotoga neapolitana (strain ATCC 49049 / DSM 4359 / NBRC 107923 / NS-E).